Reading from the N-terminus, the 1130-residue chain is Serine/threonine-protein kinase LATS1 (1130 aa).

The span at 1-11 shows a compositional bias: basic and acidic residues; sequence MKRSEKPEGYR. Residues 1–71 are disordered; sequence MKRSEKPEGY…PRQVRNPPKF (71 aa). Polar residues predominate over residues 19–30; the sequence is PASNYTVSSRQM. Residues 46-64 show a composition bias toward basic and acidic residues; it reads DAAKAEHNMSKMSTEDPRQ. In terms of domain architecture, UBA spans 100–141; the sequence is EVNPQMLQDLQAAGFDEDMVIQALQKTNNRSIEAAIEFISKM. Residues 149-276 form a disordered region; the sequence is EQMAAAAARP…SWEPNSQTKR (128 aa). Polar residues predominate over residues 167–179; sequence NVQQSVNRKQSWK. The segment covering 235–268 has biased composition (pro residues); that stretch reads NPPPPPQVRSVTPPPPPRGQTPPPRGTTPPPPSW. Thr-246 is subject to Phosphothreonine. Position 278 is a phosphoserine (Ser-278). Disordered stretches follow at residues 294–321, 365–405, 432–484, and 515–631; these read GAWQ…RGIS, AGTV…NGSI, NWPQ…PSAT, and THPS…ESRI. The span at 300–312 shows a compositional bias: pro residues; the sequence is YPPPPLNTSPMNP. Residues 373-376 carry the PPxY motif 1 motif; the sequence is PPPY. Polar residues predominate over residues 381–405; sequence ANGQSPSALQTGGSAAPSSYTNGSI. Low complexity predominate over residues 434–447; it reads PQSSSAPAQSSPSS. Positions 454–482 are enriched in polar residues; that stretch reads WQPNIPVRSNSFNNPLGNRASHSANSQPS. Ser-464 is subject to Phosphoserine; by NUAK1 and NUAK2. The interval 526-655 is interaction with YAP1; that stretch reads TVQPSPFPEG…HVENVLKSHQ (130 aa). Residues 556 to 559 carry the PPxY motif 2 motif; sequence PPPY. Over residues 579–609 the composition is skewed to basic and acidic residues; sequence PSKEDQPSLPKEDESEKSYENVDSGDKEKKQ. Phosphoserine is present on Ser-613. The span at 621–630 shows a compositional bias: basic and acidic residues; it reads KKDEERRESR. Ser-674 is subject to Phosphoserine. The region spanning 705-1010 is the Protein kinase domain; it reads FVKIKTLGIG…ADEIKAHPFF (306 aa). ATP is bound by residues 711-719 and Lys-734; that span reads LGIGAFGEV. Asp-828 acts as the Proton acceptor in catalysis. Phosphoserine; by STK3/MST2 is present on Ser-909. The AGC-kinase C-terminal domain occupies 1011–1090; sequence KTIDFSSDLR…RRFFDDNGYP (80 aa). Thr-1079 carries the phosphothreonine; by STK3/MST2 modification. The interval 1104 to 1130 is disordered; sequence SQGSEQQSDEDDQNTGSEIKNRDLVYV.

This sequence belongs to the protein kinase superfamily. AGC Ser/Thr protein kinase family. In terms of assembly, complexes with CDK1 in early mitosis. LATS1-associated CDK1 has no mitotic cyclin partner and no apparent kinase activity. Binds phosphorylated ZYX, locating this protein to the mitotic spindle and suggesting a role for actin regulatory proteins during mitosis. Binds to and colocalizes with LIMK1 at the actomyosin contractile ring during cytokinesis. Interacts (via PPxY motif 2) with YAP1 (via WW domains). Interacts with MOB1A and MOB1B. Interacts with LIMD1, WTIP and AJUBA. Interacts with ESR1, DCAF1 and DCAF13; probably recruits DCAF1 and DCAF13 to ESR1 to promote ESR1 ubiquitination and ubiquitin-mediated proteasomal degradation. Interacts with STK3/MST2; this interaction is inhibited in the presence of DLG5. Interacts with SCRIB in the presence of DLG5. Interacts with WWTR1/TAZ. Interacts with WWC1, WWC2 and WWC3 (via their WW domains). Mg(2+) is required as a cofactor. Autophosphorylated and phosphorylated during M-phase of the cell cycle. Phosphorylated by STK3/MST2 at Ser-909 and Thr-1079, which results in its activation. Phosphorylated by MAP4Ks; in parallel to STK3/MST2 and resulting to its activation. Phosphorylation at Ser-464 by NUAK1 and NUAK2 leads to decreased protein level and is required to regulate cellular senescence and cellular ploidy. As to expression, expressed in all adult tissues examined except for lung and kidney.

The protein localises to the cytoplasm. It is found in the cytoskeleton. Its subcellular location is the microtubule organizing center. The protein resides in the centrosome. It localises to the spindle. The protein localises to the midbody. It is found in the spindle pole body. The enzyme catalyses L-seryl-[protein] + ATP = O-phospho-L-seryl-[protein] + ADP + H(+). It carries out the reaction L-threonyl-[protein] + ATP = O-phospho-L-threonyl-[protein] + ADP + H(+). Functionally, negative regulator of YAP1 in the Hippo signaling pathway that plays a pivotal role in organ size control and tumor suppression by restricting proliferation and promoting apoptosis. The core of this pathway is composed of a kinase cascade wherein STK3/MST2 and STK4/MST1, in complex with its regulatory protein SAV1, phosphorylates and activates LATS1/2 in complex with its regulatory protein MOB1, which in turn phosphorylates and inactivates YAP1 oncoprotein and WWTR1/TAZ. Phosphorylation of YAP1 by LATS1 inhibits its translocation into the nucleus to regulate cellular genes important for cell proliferation, cell death, and cell migration. Acts as a tumor suppressor which plays a critical role in maintenance of ploidy through its actions in both mitotic progression and the G1 tetraploidy checkpoint. Negatively regulates G2/M transition by down-regulating CDK1 kinase activity. Involved in the control of p53 expression. Affects cytokinesis by regulating actin polymerization through negative modulation of LIMK1. May also play a role in endocrine function. Plays a role in mammary gland epithelial cell differentiation, both through the Hippo signaling pathway and the intracellular estrogen receptor signaling pathway by promoting the degradation of ESR1. Acts as an activator of the NLRP3 inflammasome by mediating phosphorylation of 'Ser-265' of NLRP3 following NLRP3 palmitoylation, promoting NLRP3 activation by NEK7. In Homo sapiens (Human), this protein is Serine/threonine-protein kinase LATS1.